The chain runs to 249 residues: DNA polymerase sliding clamp (249 aa).

It belongs to the PCNA family. Homotrimer. The subunits circularize to form a toroid; DNA passes through its center. Replication factor C (RFC) is required to load the toroid on the DNA.

Functionally, sliding clamp subunit that acts as a moving platform for DNA processing. Responsible for tethering the catalytic subunit of DNA polymerase and other proteins to DNA during high-speed replication. This is DNA polymerase sliding clamp from Thermococcus gammatolerans (strain DSM 15229 / JCM 11827 / EJ3).